Consider the following 268-residue polypeptide: Phosphate import ATP-binding protein PstB 2 (268 aa).

One can recognise an ABC transporter domain in the interval 22 to 263; it reads MALTGVNFYY…PKVKRTEDYI (242 aa). 54 to 61 is a binding site for ATP; the sequence is GPSGCGKS.

This sequence belongs to the ABC transporter superfamily. Phosphate importer (TC 3.A.1.7) family. As to quaternary structure, the complex is composed of two ATP-binding proteins (PstB), two transmembrane proteins (PstC and PstA) and a solute-binding protein (PstS).

Its subcellular location is the cell inner membrane. It carries out the reaction phosphate(out) + ATP + H2O = ADP + 2 phosphate(in) + H(+). Part of the ABC transporter complex PstSACB involved in phosphate import. Responsible for energy coupling to the transport system. The chain is Phosphate import ATP-binding protein PstB 2 from Rhizobium johnstonii (strain DSM 114642 / LMG 32736 / 3841) (Rhizobium leguminosarum bv. viciae).